The primary structure comprises 526 residues: Microphthalmia-associated transcription factor (526 aa).

The disordered stretch occupies residues glutamate 20–threonine 54. The span at serine 34–serine 44 shows a compositional bias: low complexity. Position 180 is a phosphoserine; by MAPK (serine 180). A Glycyl lysine isopeptide (Lys-Gly) (interchain with G-Cter in SUMO) cross-link involves residue lysine 289. Residues glutamine 311–leucine 364 form the bHLH domain. A coiled-coil region spans residues lysine 355 to alanine 401. The interval leucine 374 to leucine 395 is leucine-zipper. Position 405 is a phosphoserine; by GSK3 (serine 405). Serine 414 carries the post-translational modification Phosphoserine. Lysine 423 participates in a covalent cross-link: Glycyl lysine isopeptide (Lys-Gly) (interchain with G-Cter in SUMO). At serine 491 the chain carries Phosphoserine. Residues threonine 496–cysteine 526 form a disordered region. Over residues alanine 507–alanine 519 the composition is skewed to low complexity. Position 516 is a phosphoserine; by RPS6KA1 (serine 516).

The protein belongs to the MiT/TFE family. In terms of assembly, homodimer or heterodimer; dimerization is mediated via the coiled coil region. Efficient DNA binding requires dimerization with another bHLH protein. Binds DNA in the form of homodimer or heterodimer with either TFE3, TFEB or TFEC. Identified in a complex with HINT1 and CTNNB1. Interacts with KARS1. Interacts with VSX2. Phosphorylation at Ser-405 significantly enhances the ability to bind the tyrosinase promoter. Phosphorylated at Ser-180 and Ser-516 following KIT signaling, triggering a short live activation: Phosphorylation at Ser-180 and Ser-516 by MAPK and RPS6KA1, respectively, activate the transcription factor activity but also promote ubiquitination and subsequent degradation by the proteasome. Phosphorylated in response to blue light (415nm). Post-translationally, ubiquitinated following phosphorylation at Ser-180, leading to subsequent degradation by the proteasome. Deubiquitinated by USP13, preventing its degradation.

It localises to the nucleus. Its subcellular location is the cytoplasm. Transcription factor that regulates the expression of genes with essential roles in cell differentiation, proliferation and survival. Binds to M-boxes (5'-TCATGTG-3') and symmetrical DNA sequences (E-boxes) (5'-CACGTG-3') found in the promoters of target genes, such as BCL2 and tyrosinase (TYR). Plays an important role in melanocyte development by regulating the expression of tyrosinase (TYR) and tyrosinase-related protein 1 (TYRP1). Plays a critical role in the differentiation of various cell types, such as neural crest-derived melanocytes, mast cells, osteoclasts and optic cup-derived retinal pigment epithelium. This Rattus norvegicus (Rat) protein is Microphthalmia-associated transcription factor (Mitf).